The sequence spans 375 residues: 23S rRNA (uracil(747)-C(5))-methyltransferase RlmC (375 aa).

The [4Fe-4S] cluster site is built by Cys3, Cys11, Cys14, and Cys87. The S-adenosyl-L-methionine site is built by Gln212, Phe241, Glu262, and Asn307. Cys334 (nucleophile) is an active-site residue.

It belongs to the class I-like SAM-binding methyltransferase superfamily. RNA M5U methyltransferase family. RlmC subfamily.

It carries out the reaction uridine(747) in 23S rRNA + S-adenosyl-L-methionine = 5-methyluridine(747) in 23S rRNA + S-adenosyl-L-homocysteine + H(+). Catalyzes the formation of 5-methyl-uridine at position 747 (m5U747) in 23S rRNA. The sequence is that of 23S rRNA (uracil(747)-C(5))-methyltransferase RlmC from Escherichia coli (strain K12 / MC4100 / BW2952).